The following is a 554-amino-acid chain: MRREGTMRLHRTFLLRVYLKESAVITYPASKKIYCQGKIFPTIRVGMREIQLTNGDSLTLYDTSGPYSDPNISIKSPQGLPRLREPWIKVRPRKTQLAFAKEGVITPEMEYAAIRENQKRELKKNTDQERERRLQGNSLSARIPNPITPEFIRNEIACGRAILPANINHPESEPMIIGRHFLVKVNANIGNSSLTSSVEEEVEKLIWALRWGADTVMDLSTGKKIKEIRETILRHSPVPIGTVPLYEALEKVDGDVKALTWEIFRDTLISQAEQGVDYFTIHAGVLNRFIPLTQKRVTGIVSRGGSLMAKWCLLHREENFLYTHFTEICEIMRAYDVSFSLGDGLRPGSIADANDEAQFAELKIQGELNRIAWKYGVQVMNEGPGHIPLNLIEENMTKQLAYCREAPFYTLGPLTTDIAPGYDHIGSAIGAAFIAWQGCALLCYVTPKEHLGLPNKQDVKEGLIAYKIAAHAADLAKGHPAARQRDYLLSQARFEFRWHDQFNLALDAETARLFHDETLPKEAAKHAHFCSLCGPKFCAYKTSHEVRDTLQKVT.

Residues N188, M217, Y246, H282, 302-304, 343-346, and E382 contribute to the substrate site; these read SRG and DGLR. H386 provides a ligand contact to Zn(2+). Y409 serves as a coordination point for substrate. H450 serves as a coordination point for Zn(2+). 3 residues coordinate [4Fe-4S] cluster: C530, C533, and C538.

Belongs to the ThiC family. Homodimer. [4Fe-4S] cluster is required as a cofactor.

The catalysed reaction is 5-amino-1-(5-phospho-beta-D-ribosyl)imidazole + S-adenosyl-L-methionine = 4-amino-2-methyl-5-(phosphooxymethyl)pyrimidine + CO + 5'-deoxyadenosine + formate + L-methionine + 3 H(+). Its pathway is cofactor biosynthesis; thiamine diphosphate biosynthesis. Catalyzes the synthesis of the hydroxymethylpyrimidine phosphate (HMP-P) moiety of thiamine from aminoimidazole ribotide (AIR) in a radical S-adenosyl-L-methionine (SAM)-dependent reaction. In Coxiella burnetii (strain RSA 493 / Nine Mile phase I), this protein is Phosphomethylpyrimidine synthase.